The chain runs to 256 residues: D-aminoacyl-tRNA deacylase (256 aa).

The protein belongs to the DtdA deacylase family. In terms of assembly, monomer. Requires Zn(2+) as cofactor.

The catalysed reaction is a D-aminoacyl-tRNA + H2O = a tRNA + a D-alpha-amino acid + H(+). It catalyses the reaction glycyl-tRNA(Ala) + H2O = tRNA(Ala) + glycine + H(+). Functionally, D-aminoacyl-tRNA deacylase with broad substrate specificity. By recycling D-aminoacyl-tRNA to D-amino acids and free tRNA molecules, this enzyme counteracts the toxicity associated with the formation of D-aminoacyl-tRNA entities in vivo. In Thermoplasma volcanium (strain ATCC 51530 / DSM 4299 / JCM 9571 / NBRC 15438 / GSS1), this protein is D-aminoacyl-tRNA deacylase.